The chain runs to 160 residues: SsrA-binding protein (160 aa).

The protein belongs to the SmpB family.

It is found in the cytoplasm. Its function is as follows. Required for rescue of stalled ribosomes mediated by trans-translation. Binds to transfer-messenger RNA (tmRNA), required for stable association of tmRNA with ribosomes. tmRNA and SmpB together mimic tRNA shape, replacing the anticodon stem-loop with SmpB. tmRNA is encoded by the ssrA gene; the 2 termini fold to resemble tRNA(Ala) and it encodes a 'tag peptide', a short internal open reading frame. During trans-translation Ala-aminoacylated tmRNA acts like a tRNA, entering the A-site of stalled ribosomes, displacing the stalled mRNA. The ribosome then switches to translate the ORF on the tmRNA; the nascent peptide is terminated with the 'tag peptide' encoded by the tmRNA and targeted for degradation. The ribosome is freed to recommence translation, which seems to be the essential function of trans-translation. The sequence is that of SsrA-binding protein from Histophilus somni (strain 129Pt) (Haemophilus somnus).